Consider the following 150-residue polypeptide: Large ribosomal subunit protein uL23m (150 aa).

The protein belongs to the universal ribosomal protein uL23 family. In terms of assembly, component of the mitochondrial ribosome large subunit (39S) which comprises a 16S rRNA and about 50 distinct proteins.

Its subcellular location is the mitochondrion. This Drosophila melanogaster (Fruit fly) protein is Large ribosomal subunit protein uL23m (mRpL23).